A 341-amino-acid chain; its full sequence is Putative MAGE domain-containing protein MAGEA13P (341 aa).

2 disordered regions span residues 1–21 (MPHSQKSRHCELEQGLQAPKE) and 78–101 (KATPWNQSDESSRSQEKKDPGASQ). Residues 87–97 (ESSRSQEKKDP) show a composition bias toward basic and acidic residues. An MAGE domain is found at 105-304 (LEKKVDELVK…SSFPLLYEEA (200 aa)).

This is Putative MAGE domain-containing protein MAGEA13P (MAGEA13P) from Homo sapiens (Human).